A 102-amino-acid chain; its full sequence is Hypersensitivity to hygromycin-B protein 1 (102 aa).

The signal sequence occupies residues 1-17 (MSLSFLLFSPFLPPCFS). The helical transmembrane segment at 18–38 (SISICLSVLSTVSFFFAFTIP) threads the bilayer. At 39 to 69 (HYVLRCGSVDEWHIHSSAEDFRTQRCVCAVK) the chain is on the cytoplasmic side. The helical transmembrane segment at 70 to 90 (LSASLLGCLLACASWSLLLEV) threads the bilayer. Over 91–102 (SRIKWHVGTAYS) the chain is Extracellular.

The protein resides in the membrane. In terms of biological role, involved in vacuolar trafficking. The polypeptide is Hypersensitivity to hygromycin-B protein 1 (Saccharomyces cerevisiae (strain ATCC 204508 / S288c) (Baker's yeast)).